Here is a 146-residue protein sequence, read N- to C-terminus: D-aminoacyl-tRNA deacylase (146 aa).

The short motif at 137-138 (GP) is the Gly-cisPro motif, important for rejection of L-amino acids element.

This sequence belongs to the DTD family. As to quaternary structure, homodimer.

The protein resides in the cytoplasm. The catalysed reaction is glycyl-tRNA(Ala) + H2O = tRNA(Ala) + glycine + H(+). The enzyme catalyses a D-aminoacyl-tRNA + H2O = a tRNA + a D-alpha-amino acid + H(+). Functionally, an aminoacyl-tRNA editing enzyme that deacylates mischarged D-aminoacyl-tRNAs. Also deacylates mischarged glycyl-tRNA(Ala), protecting cells against glycine mischarging by AlaRS. Acts via tRNA-based rather than protein-based catalysis; rejects L-amino acids rather than detecting D-amino acids in the active site. By recycling D-aminoacyl-tRNA to D-amino acids and free tRNA molecules, this enzyme counteracts the toxicity associated with the formation of D-aminoacyl-tRNA entities in vivo and helps enforce protein L-homochirality. The protein is D-aminoacyl-tRNA deacylase of Deinococcus deserti (strain DSM 17065 / CIP 109153 / LMG 22923 / VCD115).